A 25-amino-acid polypeptide reads, in one-letter code: Granule-bound starch synthase 1, chloroplastic/amyloplastic (25 aa).

Lys16 is a binding site for ADP-alpha-D-glucose.

It belongs to the glycosyltransferase 1 family. Bacterial/plant glycogen synthase subfamily. Expressed in endosperm.

Its subcellular location is the plastid. The protein localises to the chloroplast. The protein resides in the amyloplast. The enzyme catalyses an NDP-alpha-D-glucose + [(1-&gt;4)-alpha-D-glucosyl](n) = [(1-&gt;4)-alpha-D-glucosyl](n+1) + a ribonucleoside 5'-diphosphate + H(+). The protein operates within glycan biosynthesis; starch biosynthesis. Required for the synthesis of amylose in endosperm. The protein is Granule-bound starch synthase 1, chloroplastic/amyloplastic of Fagopyrum esculentum (Common buckwheat).